A 118-amino-acid polypeptide reads, in one-letter code: Small ribosomal subunit protein bTHXc (118 aa).

The transit peptide at 1 to 55 (MASLILGAPPRVTVALPSSRLSSSHSETAGVSLSCFTHQFSLSTSSSSSIPLVYC) directs the protein to the chloroplast. Residues 61–118 (KTAKGKRFNHSFGNARPRNKSKGRGPERVPVPPAPPRKDKFENDEKIKIDIDESLFSN) form a disordered region. Positions 96–111 (PRKDKFENDEKIKIDI) are enriched in basic and acidic residues. Phosphoserine is present on Ser117.

It belongs to the bacterial ribosomal protein bTHX family. In terms of assembly, part of the 30S ribosomal subunit.

The protein resides in the plastid. Its subcellular location is the chloroplast. This is Small ribosomal subunit protein bTHXc (RPS31) from Arabidopsis thaliana (Mouse-ear cress).